The following is a 141-amino-acid chain: Lutropin subunit beta (141 aa).

A signal peptide spans 1–20; the sequence is MERLQGLLLWLLLSPSVVWA. Intrachain disulfides connect C29/C77, C43/C92, C54/C108, C58/C110, and C113/C120. The N-linked (GlcNAc...) asparagine glycan is linked to N33.

Belongs to the glycoprotein hormones subunit beta family. In terms of assembly, heterodimer of a common alpha chain and a unique beta chain which confers biological specificity to thyrotropin, lutropin, follitropin and gonadotropin.

It localises to the secreted. Promotes spermatogenesis and ovulation by stimulating the testes and ovaries to synthesize steroids. This chain is Lutropin subunit beta (Lhb), found in Mus musculus (Mouse).